Reading from the N-terminus, the 129-residue chain is Small ribosomal subunit protein uS11 (129 aa).

Belongs to the universal ribosomal protein uS11 family. In terms of assembly, part of the 30S ribosomal subunit. Interacts with proteins S7 and S18. Binds to IF-3.

Its function is as follows. Located on the platform of the 30S subunit, it bridges several disparate RNA helices of the 16S rRNA. Forms part of the Shine-Dalgarno cleft in the 70S ribosome. The chain is Small ribosomal subunit protein uS11 from Lysinibacillus sphaericus (strain C3-41).